Consider the following 193-residue polypeptide: Acyl carrier protein phosphodiesterase (193 aa).

Belongs to the AcpH family.

The catalysed reaction is holo-[ACP] + H2O = apo-[ACP] + (R)-4'-phosphopantetheine + H(+). Functionally, converts holo-ACP to apo-ACP by hydrolytic cleavage of the phosphopantetheine prosthetic group from ACP. The protein is Acyl carrier protein phosphodiesterase of Escherichia coli O6:H1 (strain CFT073 / ATCC 700928 / UPEC).